The chain runs to 233 residues: MLKPSVTSAPTADMATLTVVQPLTLDRDVARAIELLEKLQESGEVPVHKLQSLKKVLQSEFCTAIREVYQYMHETITVNGCPEFRARATAKATVAAFAASEGHSHPRVVELPKTDEGLGFNVMGGKEQNSPIYISRIIPGGVAERHGGLKRGDQLLSVNGVSVEGEHHEKAVELLKAAKDSVKLVVRYTPKVLEEMEARFEKLRTARRRQQQQLLIQQQQQQQQQQPQQNHMS.

The Kinase interacting site motif lies at 14 to 28 (MATLTVVQPLTLDRD). Residues 25 to 80 (LDRDVARAIELLEKLQESGEVPVHKLQSLKKVLQSEFCTAIREVYQYMHETITVNG) enclose the L27 domain. Positions 108 to 190 (VVELPKTDEG…SVKLVVRYTP (83 aa)) constitute a PDZ domain. Residues 214-233 (LLIQQQQQQQQQQPQQNHMS) are disordered.

This sequence belongs to the lin-7 family. In terms of assembly, forms a complex with CASK and CASKIN1. Component of the brain-specific heterotrimeric complex (LIN-10-LIN-2-LIN-7 complex) composed of at least APBA1, CASK, and LIN7, which associates with the motor protein KIF17 to transport vesicles along microtubules. Can also interact with other modular proteins containing protein-protein interaction domains like PALS1, PALS2, MPP7, DLG1, DLG2 and DLG3 through its L27 domain. Interacts with DLG4, GRIN2B and MARCHF11 as well as CDH1 and CTNNB1, the channels KCNJ12/Kir2.2, KCNJ4/Kir2.3 and probably KCNJ2/Kir2.1 and SLC6A12/BGT-1 via its PDZ domain. The association of LIN7A with cadherin and beta-catenin is calcium-dependent, occurs at synaptic junctions and requires the actin cytoskeleton. Interacts with EGFR, ERBB2, ERBB3 and ERBB4 with both PDZ and KID domains. Associates with KIF17 via APBA1. Interacts with HTR4. Forms a tripartite complex composed of DLG1, MPP7 and LIN7 (LIN7A or LIN7C). Expressed in the kidney, along the length of the nephron.

The protein localises to the cell membrane. It is found in the basolateral cell membrane. It localises to the cell junction. Its subcellular location is the postsynaptic density membrane. The protein resides in the tight junction. In terms of biological role, plays a role in establishing and maintaining the asymmetric distribution of channels and receptors at the plasma membrane of polarized cells. Forms membrane-associated multiprotein complexes that may regulate delivery and recycling of proteins to the correct membrane domains. The tripartite complex composed of LIN7 (LIN7A, LIN7B or LIN7C), CASK and APBA1 associates with the motor protein KIF17 to transport vesicles containing N-methyl-D-aspartate (NMDA) receptor subunit NR2B along microtubules. This complex may have the potential to couple synaptic vesicle exocytosis to cell adhesion in brain. Ensures the proper localization of GRIN2B (subunit 2B of the NMDA receptor) to neuronal postsynaptic density and may function in localizing synaptic vesicles at synapses where it is recruited by beta-catenin and cadherin. Required to localize Kir2 channels, GABA transporter (SLC6A12) and EGFR/ERBB1, ERBB2, ERBB3 and ERBB4 to the basolateral membrane of epithelial cells. This chain is Protein lin-7 homolog A (Lin7a), found in Mus musculus (Mouse).